A 900-amino-acid chain; its full sequence is Isoleucine--tRNA ligase (900 aa).

The 'HIGH' region motif lies at 58 to 68; the sequence is PYANGDLHTGH. E550 is a binding site for L-isoleucyl-5'-AMP. A 'KMSKS' region motif is present at residues 591–595; the sequence is KMSKS. K594 contributes to the ATP binding site. 4 residues coordinate Zn(2+): C871, C874, C888, and C891.

Belongs to the class-I aminoacyl-tRNA synthetase family. IleS type 1 subfamily. As to quaternary structure, monomer. Requires Zn(2+) as cofactor.

Its subcellular location is the cytoplasm. The enzyme catalyses tRNA(Ile) + L-isoleucine + ATP = L-isoleucyl-tRNA(Ile) + AMP + diphosphate. Functionally, catalyzes the attachment of isoleucine to tRNA(Ile). As IleRS can inadvertently accommodate and process structurally similar amino acids such as valine, to avoid such errors it has two additional distinct tRNA(Ile)-dependent editing activities. One activity is designated as 'pretransfer' editing and involves the hydrolysis of activated Val-AMP. The other activity is designated 'posttransfer' editing and involves deacylation of mischarged Val-tRNA(Ile). This Malacoplasma penetrans (strain HF-2) (Mycoplasma penetrans) protein is Isoleucine--tRNA ligase.